The sequence spans 496 residues: Glycerol kinase (496 aa).

ADP is bound at residue threonine 12. Positions 12, 13, and 14 each coordinate ATP. Threonine 12 contacts sn-glycerol 3-phosphate. Arginine 16 is an ADP binding site. Arginine 82, glutamate 83, and tyrosine 134 together coordinate sn-glycerol 3-phosphate. Glycerol contacts are provided by arginine 82, glutamate 83, and tyrosine 134. Histidine 230 is subject to Phosphohistidine; by HPr. Aspartate 244 provides a ligand contact to sn-glycerol 3-phosphate. Glycerol is bound by residues aspartate 244 and glutamine 245. 2 residues coordinate ADP: threonine 266 and glycine 309. ATP is bound by residues threonine 266, glycine 309, glutamine 313, and glycine 410. The ADP site is built by glycine 410 and asparagine 414.

It belongs to the FGGY kinase family. As to quaternary structure, homotetramer and homodimer (in equilibrium). Post-translationally, the phosphoenolpyruvate-dependent sugar phosphotransferase system (PTS), including enzyme I, and histidine-containing protein (HPr) are required for the phosphorylation, which leads to the activation of the enzyme.

It catalyses the reaction glycerol + ATP = sn-glycerol 3-phosphate + ADP + H(+). The protein operates within polyol metabolism; glycerol degradation via glycerol kinase pathway; sn-glycerol 3-phosphate from glycerol: step 1/1. Its activity is regulated as follows. Activated by phosphorylation and inhibited by fructose 1,6-bisphosphate (FBP). Functionally, key enzyme in the regulation of glycerol uptake and metabolism. Catalyzes the phosphorylation of glycerol to yield sn-glycerol 3-phosphate. This chain is Glycerol kinase, found in Bacillus thuringiensis (strain Al Hakam).